Consider the following 123-residue polypeptide: Chaperone protein SycN (123 aa).

In terms of assembly, interacts with YscB to form a complex which specifically binds to YopN.

It is found in the cytoplasm. It localises to the cell inner membrane. In terms of biological role, functions as a specific chaperone for YopN. It could facilitate the secretion and the subsequent translocation of YopN. This is Chaperone protein SycN (sycN) from Yersinia pseudotuberculosis serotype I (strain IP32953).